A 442-amino-acid chain; its full sequence is 3-phosphoshikimate 1-carboxyvinyltransferase (442 aa).

3-phosphoshikimate-binding residues include Lys-25, Ser-26, and Arg-30. Lys-25 lines the phosphoenolpyruvate pocket. 2 residues coordinate phosphoenolpyruvate: Gly-97 and Arg-125. Residues Ser-170, Gln-172, Asp-323, and Lys-350 each coordinate 3-phosphoshikimate. Gln-172 lines the phosphoenolpyruvate pocket. The active-site Proton acceptor is the Asp-323. Phosphoenolpyruvate-binding residues include Arg-354 and Arg-399.

This sequence belongs to the EPSP synthase family. In terms of assembly, monomer.

The protein localises to the cytoplasm. It carries out the reaction 3-phosphoshikimate + phosphoenolpyruvate = 5-O-(1-carboxyvinyl)-3-phosphoshikimate + phosphate. It participates in metabolic intermediate biosynthesis; chorismate biosynthesis; chorismate from D-erythrose 4-phosphate and phosphoenolpyruvate: step 6/7. In terms of biological role, catalyzes the transfer of the enolpyruvyl moiety of phosphoenolpyruvate (PEP) to the 5-hydroxyl of shikimate-3-phosphate (S3P) to produce enolpyruvyl shikimate-3-phosphate and inorganic phosphate. The protein is 3-phosphoshikimate 1-carboxyvinyltransferase of Bartonella quintana (strain Toulouse) (Rochalimaea quintana).